Here is a 362-residue protein sequence, read N- to C-terminus: Neisseria adhesin A (362 aa).

An N-terminal signal peptide occupies residues 1-23 (MKHFPSKVLTTAILATFCSGALA). The head domain stretch occupies residues 24 to 169 (ATSDDDVKKA…NIVKIDEKLE (146 aa)). 2 coiled-coil regions span residues 90 to 146 (VTNL…LNKL) and 183 to 288 (NDIA…KETR). The segment at 170–307 (AVADTVDKHA…SGLFQPYNVG (138 aa)) is coiled stalk domain. 4 beta stranded membrane-spanning segments follow: residues 307–317 (GRFNVTAAVGG), 321–332 (ESAVAIGTGFRF), 339–345 (KAGVAVG), and 351–362 (SAAYHVGVNYEW). A translocator domain region spans residues 308–362 (RFNVTAAVGGYKSESAVAIGTGFRFTENFAAKAGVAVGTSSGSSAAYHVGVNYEW).

Belongs to the autotransporter-2 (AT-2) (TC 1.B.40) family. Forms high molecular weight oligomers in whole cell extracts that are not disrupted by boiling in SDS buffer. Homotrimer. A fragment containing the N-terminal half of the mature protein (residues 24-210, head domain plus part of the stalk) binds human integrin beta-1 (ITGB1). It was not seen to bind immobilized purified CEACAMs 1, 3, 5, 6 or 8 nor commercially prepared type I collagen, fibronectin or matrigel.

The protein resides in the cell surface. The protein localises to the cell outer membrane. Its function is as follows. Adheres to and induces bacterial uptake by human epithelial cells. Upon expression in engineered Y.enterocolitica confers an 11- to 15-fold increase in bacterial adherence and uptake by human epithelial cell lines; part of the uptake is mediated by integrin beta-1 (ITGB1) suggesting it may be a human receptor for NadA. A bacterial cell surface protein; antisera against this protein induce complement-mediated killing of this and other strains. The sequence is that of Neisseria adhesin A from Neisseria meningitidis serogroup B (strain ATCC BAA-335 / MC58).